The chain runs to 228 residues: C-type lectin domain-containing protein 88 (228 aa).

Positions 1–18 are cleaved as a signal peptide; sequence MQFIFFGTLFSGLLLVCA. O-linked (Xyl...) (chondroitin sulfate) serine glycosylation is present at S27. A C-type lectin domain is found at 88–218; sequence YSDSCYWVET…CTYLFYSICE (131 aa). Intrachain disulfides connect C109-C217 and C188-C209. N-linked (GlcNAc...) asparagine glycosylation is present at N220.

This chain is C-type lectin domain-containing protein 88, found in Caenorhabditis elegans.